The sequence spans 592 residues: Aspartate--tRNA ligase (592 aa).

Glu173 serves as a coordination point for L-aspartate. The aspartate stretch occupies residues 197–200; it reads QLFK. Arg219 contributes to the L-aspartate binding site. ATP contacts are provided by residues 219–221 and Gln228; that span reads RDE. His449 provides a ligand contact to L-aspartate. An ATP-binding site is contributed by Glu483. Arg490 serves as a coordination point for L-aspartate. 535–538 lines the ATP pocket; it reads GLDR.

The protein belongs to the class-II aminoacyl-tRNA synthetase family. Type 1 subfamily. In terms of assembly, homodimer.

Its subcellular location is the cytoplasm. The catalysed reaction is tRNA(Asp) + L-aspartate + ATP = L-aspartyl-tRNA(Asp) + AMP + diphosphate. Its function is as follows. Catalyzes the attachment of L-aspartate to tRNA(Asp) in a two-step reaction: L-aspartate is first activated by ATP to form Asp-AMP and then transferred to the acceptor end of tRNA(Asp). This Shewanella loihica (strain ATCC BAA-1088 / PV-4) protein is Aspartate--tRNA ligase.